We begin with the raw amino-acid sequence, 545 residues long: Calcium-dependent protein kinase 6 (545 aa).

A lipid anchor (N-myristoyl glycine) is attached at G2. Positions 34–43 (CSSTSTATSS) are enriched in low complexity. Positions 34–58 (CSSTSTATSSGGRMPIRSHQQRLSS) are disordered. A Protein kinase domain is found at 74 to 332 (YTVGRKLGQG…AHQVLCHPWV (259 aa)). ATP contacts are provided by residues 80 to 88 (LGQGQFGTT) and K103. D198 (proton acceptor) is an active-site residue. An autoinhibitory domain region spans residues 338-368 (APDRPLAPAVLSRLKQFSAMNRLKKMALRVI). EF-hand domains follow at residues 375 to 410 (EELA…YGSN), 411 to 446 (LREA…LNKL), 447 to 482 (EREE…HNMA), and 486 to 516 (IDDI…GAID). Residues D388, D390, S392, E399, D424, D426, S428, T430, E435, D460, D462, S464, Y466, E471, D494, D496, D498, R500, and E505 each contribute to the Ca(2+) site. The segment at 526 to 545 (GRPTTATSDDPSPTISSSSR) is disordered. Low complexity predominate over residues 528-545 (PTTATSDDPSPTISSSSR).

The protein belongs to the protein kinase superfamily. Ser/Thr protein kinase family. CDPK subfamily.

Its subcellular location is the membrane. The enzyme catalyses L-seryl-[protein] + ATP = O-phospho-L-seryl-[protein] + ADP + H(+). It carries out the reaction L-threonyl-[protein] + ATP = O-phospho-L-threonyl-[protein] + ADP + H(+). Its activity is regulated as follows. Activated by calcium. Autophosphorylation may play an important role in the regulation of the kinase activity. In terms of biological role, may play a role in signal transduction pathways that involve calcium as a second messenger. This chain is Calcium-dependent protein kinase 6, found in Oryza sativa subsp. japonica (Rice).